A 1756-amino-acid chain; its full sequence is Transposon Ty1-PR2 Gag-Pol polyprotein (1756 aa).

Composition is skewed to polar residues over residues Met-1–Pro-10, Thr-48–Ser-60, and Gln-127–Phe-152. Disordered stretches follow at residues Met-1–Gln-93, Pro-126–Pro-173, and Gly-352–Thr-421. Low complexity predominate over residues Thr-153–Thr-165. The segment at Asn-299–His-401 is RNA-binding. Residues Asn-402–Ser-418 show a composition bias toward low complexity. Asp-461 acts as the For protease activity; shared with dimeric partner in catalysis. Positions Asn-583–Cys-640 are integrase-type zinc finger-like. The 177-residue stretch at Asn-660–Pro-836 folds into the Integrase catalytic domain. The Mg(2+) site is built by Asp-671 and Asp-736. Disordered stretches follow at residues Ser-957 to Lys-1088, Arg-1093 to Pro-1112, and Asp-1131 to Thr-1188. Residues Ser-961–Thr-970 show a composition bias toward low complexity. Residues Ser-1006–Thr-1016 are compositionally biased toward polar residues. Positions Glu-1039–Ser-1054 are enriched in basic and acidic residues. Composition is skewed to polar residues over residues Tyr-1055–Asp-1083 and Pro-1102–Pro-1112. A Bipartite nuclear localization signal motif is present at residues Lys-1179–Arg-1213. Residues Asn-1339–Gln-1477 form the Reverse transcriptase Ty1/copia-type domain. The Mg(2+) site is built by Asp-1347, Asp-1428, Asp-1429, Asp-1611, Glu-1653, and Asp-1686. In terms of domain architecture, RNase H Ty1/copia-type spans Asp-1611–Lys-1753.

The capsid protein forms a homotrimer, from which the VLPs are assembled. The protease is a homodimer, whose active site consists of two apposed aspartic acid residues. Post-translationally, initially, virus-like particles (VLPs) are composed of the structural unprocessed proteins Gag and Gag-Pol, and also contain the host initiator methionine tRNA (tRNA(i)-Met) which serves as a primer for minus-strand DNA synthesis, and a dimer of genomic Ty RNA. Processing of the polyproteins occurs within the particle and proceeds by an ordered pathway, called maturation. First, the protease (PR) is released by autocatalytic cleavage of the Gag-Pol polyprotein yielding capsid protein p45 and a Pol-p154 precursor protein. This cleavage is a prerequisite for subsequent processing of Pol-p154 at the remaining sites to release the mature structural and catalytic proteins. Maturation takes place prior to the RT reaction and is required to produce transposition-competent VLPs.

The protein resides in the cytoplasm. Its subcellular location is the nucleus. The catalysed reaction is DNA(n) + a 2'-deoxyribonucleoside 5'-triphosphate = DNA(n+1) + diphosphate. It catalyses the reaction Endonucleolytic cleavage to 5'-phosphomonoester.. In terms of biological role, capsid protein (CA) is the structural component of the virus-like particle (VLP), forming the shell that encapsulates the retrotransposons dimeric RNA genome. The particles are assembled from trimer-clustered units and there are holes in the capsid shells that allow for the diffusion of macromolecules. CA also has nucleocapsid-like chaperone activity, promoting primer tRNA(i)-Met annealing to the multipartite primer-binding site (PBS), dimerization of Ty1 RNA and initiation of reverse transcription. Functionally, the aspartyl protease (PR) mediates the proteolytic cleavages of the Gag and Gag-Pol polyproteins after assembly of the VLP. Its function is as follows. Reverse transcriptase/ribonuclease H (RT) is a multifunctional enzyme that catalyzes the conversion of the retro-elements RNA genome into dsDNA within the VLP. The enzyme displays a DNA polymerase activity that can copy either DNA or RNA templates, and a ribonuclease H (RNase H) activity that cleaves the RNA strand of RNA-DNA heteroduplexes during plus-strand synthesis and hydrolyzes RNA primers. The conversion leads to a linear dsDNA copy of the retrotransposon that includes long terminal repeats (LTRs) at both ends. Integrase (IN) targets the VLP to the nucleus, where a subparticle preintegration complex (PIC) containing at least integrase and the newly synthesized dsDNA copy of the retrotransposon must transit the nuclear membrane. Once in the nucleus, integrase performs the integration of the dsDNA into the host genome. The sequence is that of Transposon Ty1-PR2 Gag-Pol polyprotein (TY1B-PR2) from Saccharomyces cerevisiae (strain ATCC 204508 / S288c) (Baker's yeast).